Here is a 384-residue protein sequence, read N- to C-terminus: MADEIATLISSAGLTNETFLVLCVIAVIVIGAIVVIITSRPILDIYPYLTPSASVRARKGRLFDEKQLSEIVETNNVHEFENYLKGVPDYADVLEEYPVDKALDIQCADTYEFVARIAPKEIRSSFVVMSKKTDINNIKSLLTAKEVGLTEEETEDLLIPRGVLYEDLRSLIDADGVTDVVTSLDGTEYAAVLEDALPKYENSGMVLALESALDKYYLESLLRSSNVPADENKQILFSYVGTQVDIANLKLIIRAKKDNLSYDDIAPYILEDGYQLREWKLKDLMESPDVTNVISGLEGTKYSDVLTDAMAKYNENASIAVFEKALDAYLSKSAKSLSMKKPLGIGPIIGYVSQKETEIKNLKIIARAKREAGFPNSKIMEMLI.

It belongs to the V-ATPase V0D/AC39 subunit family. In terms of assembly, has multiple subunits with at least A(3), B(3), C, D, E, F, H, I and proteolipid K(x).

It localises to the cell membrane. Component of the A-type ATP synthase that produces ATP from ADP in the presence of a proton gradient across the membrane. The protein is A-type ATP synthase subunit C of Methanobrevibacter smithii (strain ATCC 35061 / DSM 861 / OCM 144 / PS).